We begin with the raw amino-acid sequence, 207 residues long: Large ribosomal subunit protein uL4 (207 aa).

A disordered region spans residues glycine 47–isoleucine 78. Residues glycine 60–glycine 71 are compositionally biased toward basic residues.

This sequence belongs to the universal ribosomal protein uL4 family. Part of the 50S ribosomal subunit.

Functionally, one of the primary rRNA binding proteins, this protein initially binds near the 5'-end of the 23S rRNA. It is important during the early stages of 50S assembly. It makes multiple contacts with different domains of the 23S rRNA in the assembled 50S subunit and ribosome. Its function is as follows. Forms part of the polypeptide exit tunnel. This is Large ribosomal subunit protein uL4 from Listeria innocua serovar 6a (strain ATCC BAA-680 / CLIP 11262).